The sequence spans 356 residues: tRNA N6-adenosine threonylcarbamoyltransferase (356 aa).

Fe cation is bound by residues His115 and His119. Substrate-binding positions include 138–142, Asp171, Gly184, and Asn277; that span reads LVSGG. Asp305 provides a ligand contact to Fe cation.

This sequence belongs to the KAE1 / TsaD family. Fe(2+) is required as a cofactor.

It is found in the cytoplasm. The enzyme catalyses L-threonylcarbamoyladenylate + adenosine(37) in tRNA = N(6)-L-threonylcarbamoyladenosine(37) in tRNA + AMP + H(+). Functionally, required for the formation of a threonylcarbamoyl group on adenosine at position 37 (t(6)A37) in tRNAs that read codons beginning with adenine. Is involved in the transfer of the threonylcarbamoyl moiety of threonylcarbamoyl-AMP (TC-AMP) to the N6 group of A37, together with TsaE and TsaB. TsaD likely plays a direct catalytic role in this reaction. This Polaromonas naphthalenivorans (strain CJ2) protein is tRNA N6-adenosine threonylcarbamoyltransferase.